The chain runs to 304 residues: Glutaminase (304 aa).

Residues Ser63, Asn114, Glu158, Asn165, Tyr189, Tyr240, and Val258 each contribute to the substrate site.

The protein belongs to the glutaminase family. In terms of assembly, homotetramer.

It catalyses the reaction L-glutamine + H2O = L-glutamate + NH4(+). This chain is Glutaminase, found in Shewanella amazonensis (strain ATCC BAA-1098 / SB2B).